Consider the following 474-residue polypeptide: tRNA modification GTPase MnmE (474 aa).

(6S)-5-formyl-5,6,7,8-tetrahydrofolate contacts are provided by Arg35, Glu92, and Lys135. The 166-residue stretch at 231–396 (GLHVVLAGQP…LRAALLEIAG (166 aa)) folds into the TrmE-type G domain. Asn241 is a binding site for K(+). GTP-binding positions include 241–246 (NVGKSS), 260–266 (TPIAGTT), 285–288 (DTAG), and 377–379 (SAR). Ser245 provides a ligand contact to Mg(2+). K(+)-binding residues include Thr260, Ile262, and Thr265. Thr266 lines the Mg(2+) pocket. Lys474 contributes to the (6S)-5-formyl-5,6,7,8-tetrahydrofolate binding site.

The protein belongs to the TRAFAC class TrmE-Era-EngA-EngB-Septin-like GTPase superfamily. TrmE GTPase family. In terms of assembly, homodimer. Heterotetramer of two MnmE and two MnmG subunits. Requires K(+) as cofactor.

It is found in the cytoplasm. Functionally, exhibits a very high intrinsic GTPase hydrolysis rate. Involved in the addition of a carboxymethylaminomethyl (cmnm) group at the wobble position (U34) of certain tRNAs, forming tRNA-cmnm(5)s(2)U34. The protein is tRNA modification GTPase MnmE of Ralstonia nicotianae (strain ATCC BAA-1114 / GMI1000) (Ralstonia solanacearum).